Reading from the N-terminus, the 229-residue chain is ADP-ribosylation factor-like protein 6-interacting protein 4 (229 aa).

Over residues 1-20 the composition is skewed to basic residues; it reads MAHVGSRKRSRSRSRSRSGR. Residues 1–152 are disordered; that stretch reads MAHVGSRKRS…EDNDGPVLTD (152 aa). Residues 21 to 35 show a composition bias toward basic and acidic residues; sequence RGSEKRSKRSSKDAS. Residues 66-87 show a composition bias toward low complexity; the sequence is SRSSSTSSSSSSSSSASSSSSS. Residues 90 to 117 show a composition bias toward basic residues; that stretch reads RKKRAKHKEKKRKKKKKKRKKKLKKRVK. Phosphoserine occurs at positions 140 and 174. A Glycyl lysine isopeptide (Lys-Gly) (interchain with G-Cter in SUMO2) cross-link involves residue lysine 191.

Belongs to the ARL6IP4 family. Interacts with ZCCHC17. Interacts with SRSF2. Interacts with ARL6. In terms of tissue distribution, widely expressed. Expressed at high level in testis and thymus.

Its subcellular location is the nucleus. It localises to the nucleolus. The protein resides in the nucleus speckle. Functionally, involved in modulating alternative pre-mRNA splicing with either 5' distal site activation or preferential use of 3' proximal site. The chain is ADP-ribosylation factor-like protein 6-interacting protein 4 (Arl6ip4) from Mus musculus (Mouse).